Reading from the N-terminus, the 682-residue chain is Guanylate cyclase soluble subunit beta-2 (682 aa).

Heme is bound at residue His43. Residues 408–536 (TILFSDVVTF…DTVNTASRME (129 aa)) form the Guanylate cyclase domain. The segment at 592-667 (MGRPSAPADG…QPSPDETKTS (76 aa)) is disordered. Polar residues predominate over residues 649-667 (RNSTDAVNNQPSPDETKTS).

This sequence belongs to the adenylyl cyclase class-4/guanylyl cyclase family. As to quaternary structure, heterodimer of an alpha and a beta chain. The cofactor is heme. As to expression, kidney and liver.

It localises to the cytoplasm. It catalyses the reaction GTP = 3',5'-cyclic GMP + diphosphate. Its activity is regulated as follows. Activated by nitric oxide in the presence of magnesium or manganese ions. The protein is Guanylate cyclase soluble subunit beta-2 (Gucy1b2) of Rattus norvegicus (Rat).